The following is a 237-amino-acid chain: MWSRSSLRRLTATVSTVPESPSLQGARLYLCTDARRERGDLADFADAALAGGVDIIQLRDKGSPGEKAFGPLEARAEIDALHVLAEAARRHNALVAVNDRADIARASGAEVLHLGQDDLPLTVARQIVGDRVIGRSTHDLAQAEAAIAEDVDYFCVGPCWPTPTKPGRAAPGLDLVREVAALNTTKPWFAIGGIDAQRLPDVLDAGARRVVVVRAITAAEDPRAAAEQLAGMLDSAV.

4-amino-2-methyl-5-(diphosphooxymethyl)pyrimidine is bound by residues 57-61 (QLRDK) and N98. The Mg(2+) site is built by D99 and D118. S136 provides a ligand contact to 4-amino-2-methyl-5-(diphosphooxymethyl)pyrimidine. 162–164 (TPT) is a 2-[(2R,5Z)-2-carboxy-4-methylthiazol-5(2H)-ylidene]ethyl phosphate binding site. K165 provides a ligand contact to 4-amino-2-methyl-5-(diphosphooxymethyl)pyrimidine. G193 contributes to the 2-[(2R,5Z)-2-carboxy-4-methylthiazol-5(2H)-ylidene]ethyl phosphate binding site.

The protein belongs to the thiamine-phosphate synthase family. Mg(2+) is required as a cofactor.

The catalysed reaction is 2-[(2R,5Z)-2-carboxy-4-methylthiazol-5(2H)-ylidene]ethyl phosphate + 4-amino-2-methyl-5-(diphosphooxymethyl)pyrimidine + 2 H(+) = thiamine phosphate + CO2 + diphosphate. It carries out the reaction 2-(2-carboxy-4-methylthiazol-5-yl)ethyl phosphate + 4-amino-2-methyl-5-(diphosphooxymethyl)pyrimidine + 2 H(+) = thiamine phosphate + CO2 + diphosphate. It catalyses the reaction 4-methyl-5-(2-phosphooxyethyl)-thiazole + 4-amino-2-methyl-5-(diphosphooxymethyl)pyrimidine + H(+) = thiamine phosphate + diphosphate. It participates in cofactor biosynthesis; thiamine diphosphate biosynthesis; thiamine phosphate from 4-amino-2-methyl-5-diphosphomethylpyrimidine and 4-methyl-5-(2-phosphoethyl)-thiazole: step 1/1. Condenses 4-methyl-5-(beta-hydroxyethyl)thiazole monophosphate (THZ-P) and 2-methyl-4-amino-5-hydroxymethyl pyrimidine pyrophosphate (HMP-PP) to form thiamine monophosphate (TMP). In Mycolicibacterium gilvum (strain PYR-GCK) (Mycobacterium gilvum (strain PYR-GCK)), this protein is Thiamine-phosphate synthase.